The primary structure comprises 268 residues: Homeobox protein Hox-D12 (268 aa).

Residues 102–124 (TPDAPTASEERSRTRPPFAPESS) are disordered. The homeobox DNA-binding region spans 200–259 (ARKKRKPYTKQQIAELENEFLVNEFINRQKRKELSNRLNLSDQQVKIWFQNRRMKKKRVV).

The protein belongs to the Abd-B homeobox family.

Its subcellular location is the nucleus. Sequence-specific transcription factor which is part of a developmental regulatory system that provides cells with specific positional identities on the anterior-posterior axis. The chain is Homeobox protein Hox-D12 (Hoxd12) from Mus musculus (Mouse).